The primary structure comprises 340 residues: Adenosine receptor A2b (340 aa).

Residues Met1–Thr6 lie on the Extracellular side of the membrane. The helical transmembrane segment at Thr7–Ala31 threads the bilayer. Residues Ile32–Asn41 are Cytoplasmic-facing. Residues Tyr42–Ile65 form a helical membrane-spanning segment. Over Ser66–Cys76 the chain is Extracellular. The cysteines at positions 76 and 171 are disulfide-linked. The chain crosses the membrane as a helical span at residues Leu77–Ile99. At Asp100–Arg119 the chain is on the cytoplasmic side. A helical membrane pass occupies residues Ala120–Trp142. Residues Asn143–Thr178 lie on the Extracellular side of the membrane. Asn151 and Asn154 each carry an N-linked (GlcNAc...) asparagine glycan. Glu174 contacts adenosine. The chain crosses the membrane as a helical span at residues Met179–Ile203. The Cytoplasmic portion of the chain corresponds to Lys204–Ser235. Residues Leu236–Phe259 traverse the membrane as a helical segment. Asn254 contacts adenosine. Over His260–Lys267 the chain is Extracellular. Residues Pro268 to Ala291 form a helical membrane-spanning segment. Adenosine-binding residues include Ser279 and His280. The Cytoplasmic portion of the chain corresponds to Tyr292–Ile340. A lipid anchor (S-palmitoyl cysteine) is attached at Cys310.

The protein belongs to the G-protein coupled receptor 1 family.

The protein localises to the cell membrane. Its function is as follows. Receptor for adenosine. The activity of this receptor is mediated by G proteins which activate adenylyl cyclase. This is Adenosine receptor A2b (ADORA2B) from Gallus gallus (Chicken).